Reading from the N-terminus, the 373-residue chain is tRNA (guanine(26)-N(2))-dimethyltransferase (373 aa).

The 364-residue stretch at 2-365 (KIISEGETKL…AELSDLVVLI (364 aa)) folds into the Trm1 methyltransferase domain. The S-adenosyl-L-methionine site is built by Arg35, Arg66, Asp86, Asp113, and Ala114.

Belongs to the class I-like SAM-binding methyltransferase superfamily. Trm1 family.

It catalyses the reaction guanosine(26) in tRNA + 2 S-adenosyl-L-methionine = N(2)-dimethylguanosine(26) in tRNA + 2 S-adenosyl-L-homocysteine + 2 H(+). Its function is as follows. Dimethylates a single guanine residue at position 26 of a number of tRNAs using S-adenosyl-L-methionine as donor of the methyl groups. This is tRNA (guanine(26)-N(2))-dimethyltransferase from Methanococcus maripaludis (strain C5 / ATCC BAA-1333).